The primary structure comprises 239 residues: NADH-quinone oxidoreductase subunit I 1 (239 aa).

4Fe-4S ferredoxin-type domains follow at residues Leu81–Ala111 and Ala123–Gly152. [4Fe-4S] cluster contacts are provided by Cys91, Cys94, Cys97, Cys101, Cys132, Cys135, Cys138, and Cys142.

Belongs to the complex I 23 kDa subunit family. As to quaternary structure, NDH-1 is composed of 14 different subunits. Subunits NuoA, H, J, K, L, M, N constitute the membrane sector of the complex. [4Fe-4S] cluster serves as cofactor.

The protein resides in the cell inner membrane. The enzyme catalyses a quinone + NADH + 5 H(+)(in) = a quinol + NAD(+) + 4 H(+)(out). Functionally, NDH-1 shuttles electrons from NADH, via FMN and iron-sulfur (Fe-S) centers, to quinones in the respiratory chain. The immediate electron acceptor for the enzyme in this species is believed to be ubiquinone. Couples the redox reaction to proton translocation (for every two electrons transferred, four hydrogen ions are translocated across the cytoplasmic membrane), and thus conserves the redox energy in a proton gradient. This is NADH-quinone oxidoreductase subunit I 1 from Anaeromyxobacter dehalogenans (strain 2CP-C).